A 401-amino-acid polypeptide reads, in one-letter code: 8-amino-7-oxononanoate synthase (401 aa).

Arg-19 lines the substrate pocket. 106-107 lines the pyridoxal 5'-phosphate pocket; it reads GY. Position 131 (His-131) interacts with substrate. Residues Ser-176, His-204, and Thr-233 each coordinate pyridoxal 5'-phosphate. At Lys-236 the chain carries N6-(pyridoxal phosphate)lysine. Thr-350 lines the substrate pocket.

Belongs to the class-II pyridoxal-phosphate-dependent aminotransferase family. BioF subfamily. As to quaternary structure, homodimer. Pyridoxal 5'-phosphate is required as a cofactor.

The catalysed reaction is 6-carboxyhexanoyl-[ACP] + L-alanine + H(+) = (8S)-8-amino-7-oxononanoate + holo-[ACP] + CO2. Its pathway is cofactor biosynthesis; biotin biosynthesis. Catalyzes the decarboxylative condensation of pimeloyl-[acyl-carrier protein] and L-alanine to produce 8-amino-7-oxononanoate (AON), [acyl-carrier protein], and carbon dioxide. This Pseudomonas paraeruginosa (strain DSM 24068 / PA7) (Pseudomonas aeruginosa (strain PA7)) protein is 8-amino-7-oxononanoate synthase.